Consider the following 430-residue polypeptide: UDP-glucuronate 4-epimerase 3 (430 aa).

Transmembrane regions (helical) follow at residues 29 to 49 (SVAK…IFFY) and 90 to 110 (GFSV…SAAL). 92–123 (SVLVTGAAGFVGTHVSAALKRRGDGVLGLDNF) lines the NAD(+) pocket. The active-site Proton acceptor is Y242.

This sequence belongs to the NAD(P)-dependent epimerase/dehydratase family. Homodimer. In roots, leaves, siliques, flowers, pollen and stems.

Its subcellular location is the golgi apparatus. The protein localises to the golgi stack membrane. It carries out the reaction UDP-alpha-D-glucuronate = UDP-alpha-D-galacturonate. Its function is as follows. Involved in the synthesis of the negatively charged monosaccharide that forms the backbone of pectic cell wall components. In Arabidopsis thaliana (Mouse-ear cress), this protein is UDP-glucuronate 4-epimerase 3 (GAE3).